The primary structure comprises 183 residues: Adenine phosphoribosyltransferase (183 aa).

It belongs to the purine/pyrimidine phosphoribosyltransferase family. As to quaternary structure, homodimer.

Its subcellular location is the cytoplasm. The enzyme catalyses AMP + diphosphate = 5-phospho-alpha-D-ribose 1-diphosphate + adenine. It participates in purine metabolism; AMP biosynthesis via salvage pathway; AMP from adenine: step 1/1. In terms of biological role, catalyzes a salvage reaction resulting in the formation of AMP, that is energically less costly than de novo synthesis. In Photorhabdus laumondii subsp. laumondii (strain DSM 15139 / CIP 105565 / TT01) (Photorhabdus luminescens subsp. laumondii), this protein is Adenine phosphoribosyltransferase.